The sequence spans 210 residues: Thymidylate kinase (210 aa).

11–18 is a binding site for ATP; it reads GVDGAGKT.

The protein belongs to the thymidylate kinase family.

It catalyses the reaction dTMP + ATP = dTDP + ADP. In terms of biological role, phosphorylation of dTMP to form dTDP in both de novo and salvage pathways of dTTP synthesis. The sequence is that of Thymidylate kinase (tmk) from Mycoplasma genitalium (strain ATCC 33530 / DSM 19775 / NCTC 10195 / G37) (Mycoplasmoides genitalium).